The primary structure comprises 780 residues: ATP-dependent 6-phosphofructokinase, muscle type (780 aa).

Thr-2 carries the N-acetylthreonine modification. An N-terminal catalytic PFK domain 1 region spans residues 2–390 (THEEHHAAKS…NWEVYKLLAH (389 aa)). ATP contacts are provided by residues Gly-25, 88-89 (RC), and 118-121 (GDGS). Asp-119 serves as a coordination point for Mg(2+). Substrate contacts are provided by residues 164 to 166 (SID), Arg-201, 208 to 210 (MGR), Glu-264, Arg-292, and 298 to 301 (HVQR). Asp-166 acts as the Proton acceptor in catalysis. At Ser-377 the chain carries Phosphoserine. The tract at residues 391–401 (VRPPVTKSGSY) is interdomain linker. The segment at 402–780 (TVAVMNVGAP…TRKRSGEATI (379 aa)) is C-terminal regulatory PFK domain 2. Residues Arg-471 and 528–532 (TVSNN) contribute to the beta-D-fructose 2,6-bisphosphate site. The O-linked (GlcNAc) serine glycan is linked to Ser-530. Lys-557 bears the N6-(2-hydroxyisobutyryl)lysine mark. Residues Arg-566, 573–575 (MGG), Glu-629, Arg-655, and 661–664 (HMQQ) each bind beta-D-fructose 2,6-bisphosphate. Ser-667 carries the phosphoserine modification. Arg-735 serves as a coordination point for beta-D-fructose 2,6-bisphosphate. Ser-775 carries the phosphoserine modification.

The protein belongs to the phosphofructokinase type A (PFKA) family. ATP-dependent PFK group I subfamily. Eukaryotic two domain clade 'E' sub-subfamily. In terms of assembly, homo- and heterotetramers. Phosphofructokinase (PFK) enzyme functions as a tetramer composed of different combinations of 3 types of subunits, called PFKM (M), PFKL (L) and PFKP (P). The composition of the PFK tetramer differs according to the tissue type it is present in. The kinetic and regulatory properties of the tetrameric enzyme are dependent on the subunit composition, hence can vary across tissues. Interacts (via C-terminus) with HK1 (via N-terminal spermatogenic cell-specific region). Mg(2+) serves as cofactor. In terms of processing, glcNAcylation decreases enzyme activity.

It is found in the cytoplasm. The catalysed reaction is beta-D-fructose 6-phosphate + ATP = beta-D-fructose 1,6-bisphosphate + ADP + H(+). Its pathway is carbohydrate degradation; glycolysis; D-glyceraldehyde 3-phosphate and glycerone phosphate from D-glucose: step 3/4. Its activity is regulated as follows. Allosterically activated by ADP, AMP, or fructose 2,6-bisphosphate, and allosterically inhibited by ATP or citrate. Functionally, catalyzes the phosphorylation of D-fructose 6-phosphate to fructose 1,6-bisphosphate by ATP, the first committing step of glycolysis. This chain is ATP-dependent 6-phosphofructokinase, muscle type (PFKM), found in Sus scrofa (Pig).